The sequence spans 667 residues: MKQRSLFSVLCFFFISFGVASVSAQTCTTDKGTFRPNGTYDVNRRLILSSLPSNVTDQDGLYYNGSIGQQPNRVYAIGMCIPGSTSEDCSDCIKKESEFFLKNCPNQTEAYSWPGEPTLCYVRYSNTSFSGSADLNPRNWLTNTGDLDSNLTEFTKIWEGLMGRMISAASTAKSTPSSSDNHYSADSAVLTPLLNIYALMQCTPDLSSGDCENCLRQSAIDYQSCCSQKRGGVVMRPSCFLRWDLYTYSNAFDNLTVASPPPEPPVTVPQPAGDQDNPTNNDSKGISAGVVVAITVPTVIAILILLVLGFVLFRRRKSYQRTKTESESDISTTDSLVYDFKTIEAATNKFSTSNKLGEGGFGAVYKGKLSNGTDVAVKRLSKKSGQGTREFRNEAVLVTKLQHRNLVRLLGFCLEREEQILIYEFVHNKSLDYFLFDPEKQSQLDWTRRYKIIGGIARGILYLHQDSRLKIIHRDLKASNILLDADMNPKIADFGLATIFGVEQTQGNTNRIAGTYAYMSPEYAMHGQYSMKSDIYSFGVLVLEIISGKKNSGVYQMDETSTAGNLVTYASRLWRNKSPLELVDPTFGRNYQSNEVTRCIHIALLCVQENPEDRPMLSTIILMLTSNTITLPVPRLPGFFPRSRQLKLVSEGSESDQYTSKSSSFSS.

Residues 1–24 (MKQRSLFSVLCFFFISFGVASVSA) form the signal peptide. Gnk2-homologous domains are found at residues 25–129 (QTCT…NTSF) and 135–248 (LNPR…LYTY). Residues 25-292 (QTCTTDKGTF…SKGISAGVVV (268 aa)) lie on the Extracellular side of the membrane. Asn37, Asn54, Asn64, Asn106, Asn126, Asn150, and Asn254 each carry an N-linked (GlcNAc...) asparagine glycan. Residues 259–268 (SPPPEPPVTV) are compositionally biased toward pro residues. The tract at residues 259-282 (SPPPEPPVTVPQPAGDQDNPTNND) is disordered. An N-linked (GlcNAc...) asparagine glycan is attached at Asn281. Residues 293-313 (AITVPTVIAILILLVLGFVLF) traverse the membrane as a helical segment. The Cytoplasmic segment spans residues 314 to 667 (RRRKSYQRTK…YTSKSSSFSS (354 aa)). The Protein kinase domain maps to 350–629 (FSTSNKLGEG…IILMLTSNTI (280 aa)). ATP contacts are provided by residues 356–364 (LGEGGFGAV) and Lys378. A Phosphotyrosine modification is found at Tyr423. Asp475 (proton acceptor) is an active-site residue. Ser479 carries the post-translational modification Phosphoserine. Phosphothreonine is present on Thr515. Position 523 is a phosphotyrosine (Tyr523).

It belongs to the protein kinase superfamily. Ser/Thr protein kinase family. CRK subfamily. In terms of tissue distribution, detected in root, stem, leaf and flower.

The protein localises to the membrane. It catalyses the reaction L-seryl-[protein] + ATP = O-phospho-L-seryl-[protein] + ADP + H(+). The enzyme catalyses L-threonyl-[protein] + ATP = O-phospho-L-threonyl-[protein] + ADP + H(+). In Arabidopsis thaliana (Mouse-ear cress), this protein is Cysteine-rich receptor-like protein kinase 11 (CRK11).